A 132-amino-acid polypeptide reads, in one-letter code: Small ribosomal subunit protein uS8 (132 aa).

This sequence belongs to the universal ribosomal protein uS8 family. In terms of assembly, part of the 30S ribosomal subunit. Contacts proteins S5 and S12.

In terms of biological role, one of the primary rRNA binding proteins, it binds directly to 16S rRNA central domain where it helps coordinate assembly of the platform of the 30S subunit. The sequence is that of Small ribosomal subunit protein uS8 from Xanthomonas euvesicatoria pv. vesicatoria (strain 85-10) (Xanthomonas campestris pv. vesicatoria).